The following is a 515-amino-acid chain: MNPDLDTGHNTSAPAHWGELKDDNFTGPNQTSSNSTLPQLDVTRAISVGLVLGAFILFAIVGNILVILSVACNRHLRTPTNYFIVNLAIADLLLSFTVLPFSATLEVLGYWVLGRIFCDIWAAVDVLCCTASILSLCAISIDRYIGVRYSLQYPTLVTRRKAILALLSVWVLSTVISIGPLLGWKEPAPNDDKECGVTEEPFYALFSSLGSFYIPLAVILVMYCRVYIVAKRTTKNLEAGVMKEMSNSKELTLRIHSKNFHEDTLSSTKAKGHNPRSSIAVKLFKFSREKKAAKTLGIVVGMFILCWLPFFIALPLGSLFSTLKPPDAVFKVVFWLGYFNSCLNPIIYPCSSKEFKRAFMRILGCQCRGGRRRRRRRRLGACAYTYRPWTRGGSLERSQSRKDSLDDSGSCMSGTQRTLPSASPSPGYLGRGTQPPVELCAFPEWKPGALLSLPEPPGRRGRLDSGPLFTFKLLGDPESPGTEGDTSNGGCDTTTDLANGQPGFKSNMPLAPGHF.

At 1 to 45 the chain is on the extracellular side; the sequence is MNPDLDTGHNTSAPAHWGELKDDNFTGPNQTSSNSTLPQLDVTRA. N10, N24, and N34 each carry an N-linked (GlcNAc...) asparagine glycan. Residues 46 to 70 form a helical membrane-spanning segment; sequence ISVGLVLGAFILFAIVGNILVILSV. Residues 71-83 lie on the Cytoplasmic side of the membrane; that stretch reads ACNRHLRTPTNYF. The chain crosses the membrane as a helical span at residues 84–105; the sequence is IVNLAIADLLLSFTVLPFSATL. Topologically, residues 106-115 are extracellular; that stretch reads EVLGYWVLGR. A helical membrane pass occupies residues 116–141; that stretch reads IFCDIWAAVDVLCCTASILSLCAISI. The cysteines at positions 118 and 195 are disulfide-linked. Over 142–161 the chain is Cytoplasmic; that stretch reads DRYIGVRYSLQYPTLVTRRK. The helical transmembrane segment at 162-182 threads the bilayer; that stretch reads AILALLSVWVLSTVISIGPLL. The Extracellular portion of the chain corresponds to 183–201; it reads GWKEPAPNDDKECGVTEEP. The helical transmembrane segment at 202 to 224 threads the bilayer; it reads FYALFSSLGSFYIPLAVILVMYC. Residues 225–295 are Cytoplasmic-facing; sequence RVYIVAKRTT…FSREKKAAKT (71 aa). T264 is modified (phosphothreonine). Residues 296-319 traverse the membrane as a helical segment; the sequence is LGIVVGMFILCWLPFFIALPLGSL. At 320-326 the chain is on the extracellular side; it reads FSTLKPP. A helical membrane pass occupies residues 327–351; that stretch reads DAVFKVVFWLGYFNSCLNPIIYPCS. Residues 352–515 are Cytoplasmic-facing; that stretch reads SKEFKRAFMR…SNMPLAPGHF (164 aa). C365 carries S-palmitoyl cysteine lipidation. A Nuclear localization signal motif is present at residues 368 to 378; that stretch reads RGGRRRRRRRR. 2 disordered regions span residues 392-430 and 474-515; these read GGSL…GYLG and LGDP…PGHF. Polar residues-rich tracts occupy residues 410–424 and 484–498; these read SCMS…SASP and GDTS…TDLA.

Belongs to the G-protein coupled receptor 1 family. Adrenergic receptor subfamily. ADRA1B sub-subfamily. As to quaternary structure, homo- and heterooligomer. Heterooligomerizes with ADRA1B homooligomers in cardiac myocytes. Interacts with CAVIN4.

The protein resides in the nucleus membrane. It localises to the cell membrane. Its subcellular location is the cytoplasm. It is found in the membrane. The protein localises to the caveola. Functionally, this alpha-adrenergic receptor mediates its action by association with G proteins that activate a phosphatidylinositol-calcium second messenger system. Its effect is mediated by G(q) and G(11) proteins. Nuclear ADRA1A-ADRA1B heterooligomers regulate phenylephrine (PE)-stimulated ERK signaling in cardiac myocytes. The polypeptide is Alpha-1B adrenergic receptor (Adra1b) (Rattus norvegicus (Rat)).